A 109-amino-acid polypeptide reads, in one-letter code: Nucleoid-associated protein VIBHAR_03086 (109 aa).

Disordered stretches follow at residues 1–21 (MFGKGGMGNLMKQAQQMQDRM) and 88–109 (QKEKMASVTGGMQLPPGMKMPF).

The protein belongs to the YbaB/EbfC family. Homodimer.

The protein localises to the cytoplasm. The protein resides in the nucleoid. Its function is as follows. Binds to DNA and alters its conformation. May be involved in regulation of gene expression, nucleoid organization and DNA protection. The chain is Nucleoid-associated protein VIBHAR_03086 from Vibrio campbellii (strain ATCC BAA-1116).